Reading from the N-terminus, the 280-residue chain is Tryptophan 2,3-dioxygenase (280 aa).

Substrate-binding positions include 49–53 (FIIIH), Tyr111, and Arg115. His238 is a binding site for heme. Thr252 lines the substrate pocket.

This sequence belongs to the tryptophan 2,3-dioxygenase family. In terms of assembly, homotetramer. Heme is required as a cofactor.

The enzyme catalyses L-tryptophan + O2 = N-formyl-L-kynurenine. It functions in the pathway amino-acid degradation; L-tryptophan degradation via kynurenine pathway; L-kynurenine from L-tryptophan: step 1/2. Heme-dependent dioxygenase that catalyzes the oxidative cleavage of the L-tryptophan (L-Trp) pyrrole ring and converts L-tryptophan to N-formyl-L-kynurenine. Catalyzes the oxidative cleavage of the indole moiety. This chain is Tryptophan 2,3-dioxygenase, found in Geobacillus thermodenitrificans (strain NG80-2).